Reading from the N-terminus, the 351-residue chain is Phospho-N-acetylmuramoyl-pentapeptide-transferase (351 aa).

The next 10 membrane-spanning stretches (helical) occupy residues 17–37, 62–82, 85–105, 130–150, 158–178, 190–210, 230–250, 254–274, 279–299, and 328–348; these read MAYA…YIIL, GIPT…LVFW, ILNV…FLGF, IIFS…HVSV, SFQI…LISA, GLAI…AYLT, LVIF…FNAY, IMMG…AALI, ILFS…IIQV, and QVVI…LSTI.

Belongs to the glycosyltransferase 4 family. MraY subfamily. Mg(2+) is required as a cofactor.

The protein resides in the cell inner membrane. It carries out the reaction UDP-N-acetyl-alpha-D-muramoyl-L-alanyl-gamma-D-glutamyl-meso-2,6-diaminopimeloyl-D-alanyl-D-alanine + di-trans,octa-cis-undecaprenyl phosphate = di-trans,octa-cis-undecaprenyl diphospho-N-acetyl-alpha-D-muramoyl-L-alanyl-D-glutamyl-meso-2,6-diaminopimeloyl-D-alanyl-D-alanine + UMP. It participates in cell wall biogenesis; peptidoglycan biosynthesis. In terms of biological role, catalyzes the initial step of the lipid cycle reactions in the biosynthesis of the cell wall peptidoglycan: transfers peptidoglycan precursor phospho-MurNAc-pentapeptide from UDP-MurNAc-pentapeptide onto the lipid carrier undecaprenyl phosphate, yielding undecaprenyl-pyrophosphoryl-MurNAc-pentapeptide, known as lipid I. The sequence is that of Phospho-N-acetylmuramoyl-pentapeptide-transferase from Borreliella burgdorferi (strain ATCC 35210 / DSM 4680 / CIP 102532 / B31) (Borrelia burgdorferi).